A 256-amino-acid polypeptide reads, in one-letter code: uncharacterized protein (256 aa).

2 helical membrane passes run 181–201 (CCII…ASMV) and 231–251 (GIAV…GLIA).

The protein resides in the cell membrane. This is an uncharacterized protein from Methanocaldococcus jannaschii (strain ATCC 43067 / DSM 2661 / JAL-1 / JCM 10045 / NBRC 100440) (Methanococcus jannaschii).